Here is an 88-residue protein sequence, read N- to C-terminus: Small ribosomal subunit protein bS20 (88 aa).

2 disordered regions span residues 1-25 and 61-88; these read MANSPQAKKRARQNERRFAINKARR and GVTKGVMHKNTAARKMSRLSSRVKALGA.

This sequence belongs to the bacterial ribosomal protein bS20 family.

Its function is as follows. Binds directly to 16S ribosomal RNA. The chain is Small ribosomal subunit protein bS20 from Jannaschia sp. (strain CCS1).